The chain runs to 187 residues: MITDRKAKAKPERGVEELLEYLGEDLTKPGVLNTPKRFVKAMEELTRGLREPPPEVVFFPLEYDVELGPVVIENIGAVSLCEHHLLPILLRISVAYVPGDGVPGLSKVIRLVKWAAARPIMQERFTEWLADLLMEKLRAKGVQVKVCGVHMCSFIRGVKDEHHNMITEARRGEIDVKLSCKRPLGCR.

Zn(2+)-binding residues include Cys81, His84, and Cys152.

Belongs to the GTP cyclohydrolase I family. In terms of assembly, toroid-shaped homodecamer, composed of two pentamers of five dimers.

It catalyses the reaction GTP + H2O = 7,8-dihydroneopterin 3'-triphosphate + formate + H(+). It functions in the pathway cofactor biosynthesis; 7,8-dihydroneopterin triphosphate biosynthesis; 7,8-dihydroneopterin triphosphate from GTP: step 1/1. This is GTP cyclohydrolase 1 from Pyrobaculum aerophilum (strain ATCC 51768 / DSM 7523 / JCM 9630 / CIP 104966 / NBRC 100827 / IM2).